The following is a 916-amino-acid chain: Phosphoenolpyruvate carboxylase (916 aa).

Active-site residues include H144 and K578.

The protein belongs to the PEPCase type 1 family. The cofactor is Mg(2+).

It carries out the reaction oxaloacetate + phosphate = phosphoenolpyruvate + hydrogencarbonate. In terms of biological role, forms oxaloacetate, a four-carbon dicarboxylic acid source for the tricarboxylic acid cycle. The chain is Phosphoenolpyruvate carboxylase from Aromatoleum aromaticum (strain DSM 19018 / LMG 30748 / EbN1) (Azoarcus sp. (strain EbN1)).